A 962-amino-acid polypeptide reads, in one-letter code: Spliceosome associated factor 3, U4/U6 recycling protein (962 aa).

Residues 1-21 (MATTAASSASEPEVEPQAGPE) show a composition bias toward low complexity. The tract at residues 1 to 92 (MATTAASSAS…EDEWEYDEEE (92 aa)) is disordered. Alanine 2 carries the post-translational modification N-acetylalanine. The tract at residues 2 to 352 (ATTAASSASE…LVPDLWIRYS (351 aa)) is mediates interaction with PRPF3. Position 10 is a phosphoserine (serine 10). Over residues 81-92 (AGEDEWEYDEEE) the composition is skewed to acidic residues. HAT repeat units lie at residues 127–159 (GELS…DEIS), 165–196 (LDRE…YSVG), 202–238 (GGLE…FESA), 243–276 (ARLE…WSEE), 325–357 (GDPA…YLDR), 360–392 (KVKD…AMER), 395–431 (LDHQ…YLRR), 441–474 (KELE…PSCL), and 488–521 (NNMQ…LERA). A Phosphoserine modification is found at serine 216. The required for interaction with USP4 stretch occupies residues 488–521 (NNMQKARELWDSIMTRGNAKYANMWLEYYNLERA). The necessary and sufficient for U6 snRNA binding stretch occupies residues 538 to 952 (CTSDYPEHVC…VATEAPKMSN (415 aa)). The stretch at 559 to 618 (TLEDWDLAIQKTETRLARVNEQRMKAAEKEAALVQQEEEKAEQRKKVRAEKKALKKKKKT) forms a coiled coil. A compositionally biased stretch (basic and acidic residues) spans 591–602 (LVQQEEEKAEQR). Positions 591–696 (LVQQEEEKAE…SLKRDMPKVA (106 aa)) are disordered. Residues 601 to 670 (QRKKVRAEKK…KEETELSGKC (70 aa)) are required for nuclear localization. A Nuclear localization signal motif is present at residues 602–609 (RKKVRAEK). Residues 603-618 (KKVRAEKKALKKKKKT) are compositionally biased toward basic residues. Acidic residues predominate over residues 627-640 (DEDEENEWGEEEEE). Position 651 is a phosphoserine (serine 651). The span at 680-696 (KQKEKAASLKRDMPKVA) shows a compositional bias: basic and acidic residues. The RRM 1 domain maps to 704 to 782 (VTVFVSNLPY…RPMFVSPCVD (79 aa)). 2 positions are modified to phosphoserine: serine 795 and serine 852. Residues 801–878 (HKLFISGLPF…NVIKVAISNP (78 aa)) enclose the RRM 2 domain. Residues 880–962 (QRKVPEKPEV…ADFAKLLLRK (83 aa)) form a disordered region. Arginine 906 bears the Omega-N-methylarginine mark.

In terms of assembly, component of the 7SK snRNP complex at least composed of P-TEFb (composed of CDK9 and CCNT1/cyclin-T1), HEXIM1, HEXIM2, BCDIN3, SART3 proteins and 7SK and U6 snRNAs. Interacts with AGO1 and AGO2. Interacts with PRPF3 and USP4; the interaction with PRPF3 is direct and recruits USP4 to its substrate PRPF3. Interacts with USP15; the interaction is direct. In terms of tissue distribution, ubiquitously expressed, with low level of expression in liver, heart and skeletal. Also detected in hematopoietic cells (at protein level).

It is found in the nucleus. Its subcellular location is the nucleoplasm. The protein resides in the cajal body. It localises to the nucleus speckle. The protein localises to the cytoplasm. Its function is as follows. U6 snRNP-binding protein that functions as a recycling factor of the splicing machinery. Promotes the initial reassembly of U4 and U6 snRNPs following their ejection from the spliceosome during its maturation. Also binds U6atac snRNPs and may function as a recycling factor for U4atac/U6atac spliceosomal snRNP, an initial step in the assembly of U12-type spliceosomal complex. The U12-type spliceosomal complex plays a role in the splicing of introns with non-canonical splice sites. May also function as a substrate-targeting factor for deubiquitinases like USP4 and USP15. Recruits USP4 to ubiquitinated PRPF3 within the U4/U5/U6 tri-snRNP complex, promoting PRPF3 deubiquitination and thereby regulating the spliceosome U4/U5/U6 tri-snRNP spliceosomal complex disassembly. May also recruit the deubiquitinase USP15 to histone H2B and mediate histone deubiquitination, thereby regulating gene expression and/or DNA repair. May play a role in hematopoiesis probably through transcription regulation of specific genes including MYC. This chain is Spliceosome associated factor 3, U4/U6 recycling protein, found in Mus musculus (Mouse).